The primary structure comprises 331 residues: Small ribosomal subunit protein uS2 (331 aa).

It belongs to the universal ribosomal protein uS2 family.

The protein is Small ribosomal subunit protein uS2 of Rhodopseudomonas palustris (strain BisB5).